The chain runs to 142 residues: Hemoglobin subunit alpha (142 aa).

Positions 2 to 142 (VLSPADKSNV…VSTVLTSKYR (141 aa)) constitute a Globin domain. At serine 4 the chain carries Phosphoserine. An N6-succinyllysine mark is found at lysine 8 and lysine 12. Lysine 17 carries the N6-acetyllysine; alternate modification. Lysine 17 is subject to N6-succinyllysine; alternate. Position 25 is a phosphotyrosine (tyrosine 25). Serine 36 carries the post-translational modification Phosphoserine. Lysine 41 is modified (N6-succinyllysine). Serine 50 carries the post-translational modification Phosphoserine. Residue histidine 59 coordinates O2. Residue histidine 88 coordinates heme b. At serine 103 the chain carries Phosphoserine. The residue at position 109 (threonine 109) is a Phosphothreonine. A Phosphoserine modification is found at serine 125. Phosphothreonine is present on residues threonine 135 and threonine 138. The residue at position 139 (serine 139) is a Phosphoserine.

Belongs to the globin family. As to quaternary structure, heterotetramer of two alpha chains and two beta chains. Red blood cells.

In terms of biological role, involved in oxygen transport from the lung to the various peripheral tissues. Its function is as follows. Hemopressin acts as an antagonist peptide of the cannabinoid receptor CNR1. Hemopressin-binding efficiently blocks cannabinoid receptor CNR1 and subsequent signaling. The sequence is that of Hemoglobin subunit alpha (HBA) from Ursus maritimus (Polar bear).